The sequence spans 156 residues: Cyclic pyranopterin monophosphate synthase (156 aa).

Substrate is bound by residues 75–77 (LCH) and 111–112 (ME). The active site involves D126.

It belongs to the MoaC family. In terms of assembly, homohexamer; trimer of dimers.

It carries out the reaction (8S)-3',8-cyclo-7,8-dihydroguanosine 5'-triphosphate = cyclic pyranopterin phosphate + diphosphate. The protein operates within cofactor biosynthesis; molybdopterin biosynthesis. Catalyzes the conversion of (8S)-3',8-cyclo-7,8-dihydroguanosine 5'-triphosphate to cyclic pyranopterin monophosphate (cPMP). The polypeptide is Cyclic pyranopterin monophosphate synthase (Corynebacterium glutamicum (strain R)).